A 288-amino-acid polypeptide reads, in one-letter code: Pyridoxal kinase PdxY (288 aa).

Substrate is bound by residues Ser12 and 47–48 (TQ). ATP is bound by residues Asp114, Glu151, Lys184, and 211–214 (RPLL). Asp225 serves as a coordination point for substrate.

It belongs to the pyridoxine kinase family. PdxY subfamily. Homodimer. The cofactor is Mg(2+).

It carries out the reaction pyridoxal + ATP = pyridoxal 5'-phosphate + ADP + H(+). Its pathway is cofactor metabolism; pyridoxal 5'-phosphate salvage; pyridoxal 5'-phosphate from pyridoxal: step 1/1. In terms of biological role, pyridoxal kinase involved in the salvage pathway of pyridoxal 5'-phosphate (PLP). Catalyzes the phosphorylation of pyridoxal to PLP. This Pseudomonas paraeruginosa (strain DSM 24068 / PA7) (Pseudomonas aeruginosa (strain PA7)) protein is Pyridoxal kinase PdxY.